A 459-amino-acid polypeptide reads, in one-letter code: Elongation factor 1-alpha (459 aa).

Gly2 bears the N,N,N-trimethylglycine mark. Position 3 is an N6,N6-dimethyllysine; alternate (Lys3). The residue at position 3 (Lys3) is an N6-methyllysine; alternate. A tr-type G domain is found at 5–240 (KTHVNVVVIG…DAVDPPTRPS (236 aa)). The G1 stretch occupies residues 14-21 (GHVDSGKS). Residue 14–21 (GHVDSGKS) coordinates GTP. N6-methyllysine is present on Lys30. A G2 region spans residues 70–74 (VITID). Lys79 is modified (N6,N6,N6-trimethyllysine). The interval 91–94 (DAPG) is G3. Residues 91 to 95 (DAPGH) and 153 to 156 (NKMD) contribute to the GTP site. A G4 region spans residues 153–156 (NKMD). The G5 stretch occupies residues 192–194 (SGW). At Lys316 the chain carries N6,N6-dimethyllysine; alternate. Lys316 is subject to N6-methyllysine; alternate. Residue Lys390 is modified to N6-methyllysine.

This sequence belongs to the TRAFAC class translation factor GTPase superfamily. Classic translation factor GTPase family. EF-Tu/EF-1A subfamily.

The protein localises to the cytoplasm. This protein promotes the GTP-dependent binding of aminoacyl-tRNA to the A-site of ribosomes during protein biosynthesis. In Blastobotrys adeninivorans (Yeast), this protein is Elongation factor 1-alpha (TEF).